The sequence spans 529 residues: Cytochrome P450 monooxygenase CLM2 (529 aa).

The helical transmembrane segment at 2–19 (LLIIVVLVGTLIYFLSFH) threads the bilayer. 2 N-linked (GlcNAc...) asparagine glycosylation sites follow: N244 and N281. C438 is a heme binding site.

Belongs to the cytochrome P450 family. It depends on heme as a cofactor.

It localises to the membrane. The catalysed reaction is (-)-longiborneol + reduced [NADPH--hemoprotein reductase] + O2 = culmorin + oxidized [NADPH--hemoprotein reductase] + H2O + H(+). Its pathway is mycotoxin biosynthesis. In terms of biological role, cytochrome P450 monooxygenase involved in the biosynthesis of culmorin, a tricyclic sesquiterpene diol reported to have antifungal activity and some phytotoxicity to wheat coleoptile tissue, contributing to Fusarium head blight disease. The terpene cyclase CLM1 is responsible for the cyclization of farnesyl diphosphate into the intermediate longiborneol. Longiborneol is then hydroxylated in a regio- and endo-stereoselective manner at position C-11 by the cytochrome P450 monooxygenase CLM2 to produce culmorin. Additional non-specific oxygenases are also able to hydroxylate longiborneol at other sites than C-11 leading to 3-hydroxylongiborneol, 5-hydroxylongiborneol, 12-hydroxylongiborneol and 15-hydroxylongiborneol. Moreover, another oxygenase capable of installing a C-11 exo-hydroxy group in longiborneol can also yield 11-epi-acetylculmorin. The production of these longiborneol derivatives is dwarfed by the high abundance of culmorin, suggesting that CLM2 displays superior enzymatic activity to the unidentified, possibly promiscuous, additional oxygenases. The polypeptide is Cytochrome P450 monooxygenase CLM2 (Gibberella zeae (strain ATCC MYA-4620 / CBS 123657 / FGSC 9075 / NRRL 31084 / PH-1) (Wheat head blight fungus)).